Here is a 288-residue protein sequence, read N- to C-terminus: Phenazine biosynthesis-like domain-containing protein 2 (288 aa).

Glu46 is a catalytic residue.

This sequence belongs to the PhzF family.

This chain is Phenazine biosynthesis-like domain-containing protein 2 (Pbld2), found in Mus musculus (Mouse).